Reading from the N-terminus, the 582-residue chain is Myoneurin (582 aa).

Residues 24-89 (CDCTIVIGEF…IYTGTLNLDS (66 aa)) enclose the BTB domain. The segment at 169-197 (QGALAKKSSQTKKKKKAFNSPKTGQNKTV) is disordered. Short sequence motifs (nuclear localization signal) lie at residues 174–190 (KKSSQTKKKKKAFNSPK) and 257–262 (KRKRGK). Residues 188–197 (SPKTGQNKTV) show a composition bias toward polar residues. The residue at position 289 (serine 289) is a Phosphoserine. The C2H2-type 1; degenerate zinc-finger motif lies at 302–324 (PMCNTRGKVFSEASSLRRHMRIH). 6 C2H2-type zinc fingers span residues 330–352 (YVCHLCGKAFTQCNQLKTHVRTH), 358–381 (YKCELCDKGFAQKCQLVFHSRMHH), 387–409 (YKCDVCNLQFATSSNLKIHARKH), 415–437 (YVCDRCGQRFAQASTLTYHVRRH), 443–465 (YVCDTCGKAFAVSSSLITHSRKH), and 471–494 (FICELCGNSYTDIKNLKKHKTKVH). The disordered stretch occupies residues 489–538 (HKTKVHSGADKTPDSSAEDHTLSEQDSIQKSPLSETMDVKPSDTTLPLAL). Basic and acidic residues predominate over residues 495-511 (SGADKTPDSSAEDHTLS). Over residues 512 to 522 (EQDSIQKSPLS) the composition is skewed to polar residues.

Belongs to the krueppel C2H2-type zinc-finger protein family.

It is found in the nucleus. The chain is Myoneurin (MYNN) from Pongo abelii (Sumatran orangutan).